The primary structure comprises 374 residues: 2-oxoglutarate-Fe(II) type oxidoreductase ppzC (374 aa).

Residues 111–131 form a disordered region; the sequence is KKGPFDSGYRGPGTQRVNPDE. The Fe2OG dioxygenase domain maps to 220-330; it reads YPDASLEINF…RVSMPFFWGF (111 aa). Residues His-254, Asp-256, and His-311 each coordinate Fe cation. Arg-321 lines the 2-oxoglutarate pocket.

This sequence belongs to the iron/ascorbate-dependent oxidoreductase family. Requires Fe(2+) as cofactor.

The catalysed reaction is peramine + 2-oxoglutarate + O2 = 8-hydroxyperamine + succinate + CO2. It functions in the pathway secondary metabolite biosynthesis. Its function is as follows. 2-oxoglutarate-Fe(II) type oxidoreductase; part of the gene cluster that mediates the biosynthesis of pyrrolopyrazines, secondary metabolites showing insecticidal activity. Within the pathway, ppzC uses peramine as substrate for hydroxylation to yield the novel analog 8-hydroxyperamine. The single multifunctional NRPS ppzA is sufficient to produce peramine via condensation of 1-pyrroline-5-carboxylate and arginine, N-methylation of the alpha-amino group of arginine and reduction of the thioester and the cyclization to form an iminium ion resulting in release from the peptide synthetase. Deprotonation of this intermediate and oxidation of the pyrroline ring would give rise to peramine. In Epichloe species that produce only peramine, the peramine synthetase gene is not localized in a gene cluster, in contrast to Metarhizium species that contain additional pyrrolopyrazine biosynthesis genes. The 2-oxoglutarate-Fe(II) type oxidoreductase ppzC hydroxylates peramine to yield the newly identified compound 8-hydroxyperamine whereas ppzD converts L-proline into trans-4-hydroxy-L-proline, a precursor of peramine biosynthesis. This is 2-oxoglutarate-Fe(II) type oxidoreductase ppzC (ppzC) from Metarhizium majus (strain ARSEF 297).